The chain runs to 314 residues: Taste receptor type 2 member 42 (314 aa).

Topologically, residues 1–7 are extracellular; that stretch reads MATELDK. Residues 8 to 28 traverse the membrane as a helical segment; it reads IFLTLAIVEFIIGMLGNVFIG. Topologically, residues 29 to 50 are cytoplasmic; sequence LANCSEGIKNQKVFSVDFILTC. Residues 51-71 form a helical membrane-spanning segment; that stretch reads LAISTIGHLLVILFDSHVAGL. Over 72–101 the chain is Extracellular; it reads APHLYATDRVVRPVTVLWHMTNHLTTWLAT. A helical membrane pass occupies residues 102–122; the sequence is CLSIFYFFKIAHFPHSLFLWL. Residues 123 to 127 lie on the Cytoplasmic side of the membrane; sequence RWRMN. A helical transmembrane segment spans residues 128-148; that stretch reads RVIAILLTLSLFLLIFDCLVL. Residues 149-187 lie on the Extracellular side of the membrane; it reads EMFIDISLNIIDKSNLTLYLDESKTPYDKLFLLKTLLSL. N-linked (GlcNAc...) asparagine glycosylation is present at Asn163. A helical transmembrane segment spans residues 188 to 208; that stretch reads NSFIPFSLCLTSLLFLFLSLV. Residues 209 to 238 lie on the Cytoplasmic side of the membrane; the sequence is RHTRNLKLSSLGSRDSSTEAHRRAMKMVMS. Residues 239–259 form a helical membrane-spanning segment; that stretch reads FLFLFIVHFFSLQVANWTFCI. Residues 260–265 lie on the Extracellular side of the membrane; that stretch reads LGNNKY. The chain crosses the membrane as a helical span at residues 266-286; the sequence is TQFVMLALHAFPSCHSFILIL. Topologically, residues 287–314 are cytoplasmic; that stretch reads GNSKLRQTAVRLLWHLRNYTKRPNPLPL.

Belongs to the G-protein coupled receptor T2R family.

The protein localises to the membrane. In terms of biological role, receptor that may play a role in the perception of bitterness and is gustducin-linked. May play a role in sensing the chemical composition of the gastrointestinal content. The activity of this receptor may stimulate alpha gustducin, mediate PLC-beta-2 activation and lead to the gating of TRPM5. This Papio hamadryas (Hamadryas baboon) protein is Taste receptor type 2 member 42 (TAS2R42).